Reading from the N-terminus, the 188-residue chain is UPF0398 protein OEOE_1093 (188 aa).

This sequence belongs to the UPF0398 family.

This is UPF0398 protein OEOE_1093 from Oenococcus oeni (strain ATCC BAA-331 / PSU-1).